The primary structure comprises 247 residues: ATP synthase subunit a, chloroplastic (247 aa).

Helical transmembrane passes span 38-58 (QVLI…TLAV), 95-115 (VPFI…GALL), 134-154 (INTT…AGLT), 199-219 (LVVV…VMFL), and 220-240 (GLFT…AYIG).

It belongs to the ATPase A chain family. As to quaternary structure, F-type ATPases have 2 components, CF(1) - the catalytic core - and CF(0) - the membrane proton channel. CF(1) has five subunits: alpha(3), beta(3), gamma(1), delta(1), epsilon(1). CF(0) has four main subunits: a, b, b' and c.

It localises to the plastid. The protein resides in the chloroplast thylakoid membrane. Its function is as follows. Key component of the proton channel; it plays a direct role in the translocation of protons across the membrane. The polypeptide is ATP synthase subunit a, chloroplastic (Vitis vinifera (Grape)).